The following is a 242-amino-acid chain: Probable transcriptional regulatory protein NMA1902 (242 aa).

The protein belongs to the TACO1 family.

It localises to the cytoplasm. In Neisseria meningitidis serogroup A / serotype 4A (strain DSM 15465 / Z2491), this protein is Probable transcriptional regulatory protein NMA1902.